Consider the following 455-residue polypeptide: UDP-N-acetylmuramoylalanine--D-glutamate ligase (455 aa).

112–118 (GTNGKTT) contacts ATP.

The protein belongs to the MurCDEF family.

Its subcellular location is the cytoplasm. It carries out the reaction UDP-N-acetyl-alpha-D-muramoyl-L-alanine + D-glutamate + ATP = UDP-N-acetyl-alpha-D-muramoyl-L-alanyl-D-glutamate + ADP + phosphate + H(+). Its pathway is cell wall biogenesis; peptidoglycan biosynthesis. In terms of biological role, cell wall formation. Catalyzes the addition of glutamate to the nucleotide precursor UDP-N-acetylmuramoyl-L-alanine (UMA). This chain is UDP-N-acetylmuramoylalanine--D-glutamate ligase, found in Trichormus variabilis (strain ATCC 29413 / PCC 7937) (Anabaena variabilis).